The sequence spans 353 residues: MEAPRSAPRERERARTTSGSDQVHSWILVTSQVLSAAWRIARAFVMTTLSPLSATFSYFRSLYLYLGHQLKWWIGYLQRKFKRNLSVEAEVDLLSYCAREWKGEAPRARLMRKAYEELFWRHHIKCVRAVKRDNYDALRSVLFQIFSQGLSFPSWMKEKDIVKLPEKLLFSQGCNWIQQYSFGPEKYTGSNVFGKLRKCVELLKLQWTEFSGMRDHHKRGSMCNSLFSDAILECKLYEALKFLMLYQVTEAYEQMKTNKVIPSLFRLLFSRESSPDPLSFMMNHLNSIGDTCGLDQIDMFILGYSLQVKIKVFRLFKFNSRDFAVCYPEEPLREWPEISLLTENGHHYHIPVF.

The tract at residues 1–80 is required for membrane binding; sequence MEAPRSAPRE…KWWIGYLQRK (80 aa). The OTU domain occupies 125–353; that stretch reads KCVRAVKRDN…NGHHYHIPVF (229 aa).

This sequence belongs to the peptidase C65 family. Otulin subfamily. In terms of assembly, does not bind ubiquitin or ubiquitin-like proteins.

It localises to the cytoplasm. The protein resides in the endoplasmic reticulum membrane. It is found in the nucleus envelope. Functionally, lacks deubiquitinase activity. The protein is Inactive ubiquitin thioesterase OTULINL of Mus musculus (Mouse).